A 230-amino-acid chain; its full sequence is Eukaryotic translation initiation factor 4E-1 (230 aa).

The interval 1–53 (MVVEDSQKSTITDEQNPSRVDNDDDDLEDGEILEDADDAASAASKPPSAFLRN) is disordered. Over residues 8–19 (KSTITDEQNPSR) the composition is skewed to polar residues. Acidic residues predominate over residues 22–38 (NDDDDLEDGEILEDADD). The span at 39-49 (AASAASKPPSA) shows a compositional bias: low complexity. EIF4G-binding regions lie at residues 55–58 (HPLE) and 65–101 (FDNPSAKSKQAAWGSSIRPIYTFSTVEEFWSIYNNIH). MRNA-binding positions include 73 to 78 (KQAAWG), Lys105, and 123 to 124 (WE). Cys128 and Cys166 are oxidised to a cystine. The interval 149–158 (YTLLAMIGEQ) is EIF4G-binding. Residues 173–178 (RNRQDK) and 218–222 (KKHER) contribute to the mRNA site.

Belongs to the eukaryotic initiation factor 4E family. EIF4F is a multi-subunit complex, the composition of which varies with external and internal environmental conditions. It is composed of at least EIF4A, EIF4E and EIF4G. EIF4E is also known to interact with other partners. In higher plants two isoforms of EIF4F have been identified, named isoform EIF4F and isoform EIF(iso)4F. Isoform EIF4F has subunits p220 and p26, whereas isoform EIF(iso)4F has subunits p82 and p28. In terms of assembly, (Microbial infection) Interacts with potyvirus viral genome-linked protein (VPg); this interaction is possible in susceptible hosts but impaired in resistant plants. Post-translationally, according to the redox status, the Cys-128-Cys-166 disulfide bridge may have a role in regulating protein function by affecting its ability to bind capped mRNA.

Its subcellular location is the nucleus. It localises to the cytoplasm. In terms of biological role, component of the protein complex eIF4F, which is involved in the recognition of the mRNA cap, ATP-dependent unwinding of 5'-terminal secondary structure and recruitment of mRNA to the ribosome. Recognizes and binds the 7-methylguanosine-containing mRNA cap during an early step in the initiation of protein synthesis and facilitates ribosome binding by inducing the unwinding of the mRNAs secondary structures. Key component of recessive resistance to potyviruses. (Microbial infection) Susceptibility host factor required for viral infection by recruiting viral RNAs to the host ribosomal complex via an interaction with viral genome-linked protein (VPg). In Phaseolus vulgaris (Kidney bean), this protein is Eukaryotic translation initiation factor 4E-1.